We begin with the raw amino-acid sequence, 194 residues long: Peptidyl-tRNA hydrolase (194 aa).

Tyr-16 is a tRNA binding site. Catalysis depends on His-21, which acts as the Proton acceptor. Residues Phe-67, Asn-69, and Asn-115 each coordinate tRNA.

Belongs to the PTH family. Monomer.

The protein resides in the cytoplasm. It catalyses the reaction an N-acyl-L-alpha-aminoacyl-tRNA + H2O = an N-acyl-L-amino acid + a tRNA + H(+). Its function is as follows. Hydrolyzes ribosome-free peptidyl-tRNAs (with 1 or more amino acids incorporated), which drop off the ribosome during protein synthesis, or as a result of ribosome stalling. Catalyzes the release of premature peptidyl moieties from peptidyl-tRNA molecules trapped in stalled 50S ribosomal subunits, and thus maintains levels of free tRNAs and 50S ribosomes. The sequence is that of Peptidyl-tRNA hydrolase from Salmonella heidelberg (strain SL476).